The chain runs to 538 residues: Chaperonin GroEL (538 aa).

ATP is bound by residues 29–32 (TIGP), 86–90 (DGTTT), Gly-413, 476–478 (NAA), and Asp-492.

Belongs to the chaperonin (HSP60) family. Forms a cylinder of 14 subunits composed of two heptameric rings stacked back-to-back. Interacts with the co-chaperonin GroES.

The protein localises to the cytoplasm. The enzyme catalyses ATP + H2O + a folded polypeptide = ADP + phosphate + an unfolded polypeptide.. Functionally, together with its co-chaperonin GroES, plays an essential role in assisting protein folding. The GroEL-GroES system forms a nano-cage that allows encapsulation of the non-native substrate proteins and provides a physical environment optimized to promote and accelerate protein folding. This Staphylococcus aureus (strain USA300) protein is Chaperonin GroEL.